The sequence spans 330 residues: T-cell leukemia homeobox protein 1 (330 aa).

The segment at 186–207 is disordered; the sequence is DRFTGHPYQNRTPPKKKKPRTS. The homeobox DNA-binding region spans 201-260; sequence KKKPRTSFTRLQICELEKRFHRQKYLASAERAALAKALKMTDAQVKTWFQNRRTKWRRQT. At Lys236 the chain carries N6-acetyllysine.

In terms of assembly, interacts with MEIS1, MEIS2, PBX1, PBX2 and PBX3.

The protein resides in the nucleus. Controls the genesis of the spleen. Binds to the DNA sequence 5'-GGCGGTAAGTGG-3'. This is T-cell leukemia homeobox protein 1 (TLX1) from Homo sapiens (Human).